The sequence spans 285 residues: Involucrin (285 aa).

3 disordered regions span residues 1 to 93 (MSQQ…QEQK), 120 to 256 (LEQQ…AQVQ), and 266 to 285 (LPLI…PEHQ). Polar residues predominate over residues 27–39 (IDTQQEQVKQPTS). 3 stretches are compositionally biased toward low complexity: residues 72–87 (EQQC…QKQQ), 120–129 (LEQQQEQQES), and 137–147 (EQCLEQQQEQQ). Composition is skewed to basic and acidic residues over residues 149 to 165 (SQEK…KEEL), 175 to 185 (EQCEKHQEAKN), and 200 to 233 (QQKE…KEEQ). Low complexity predominate over residues 235–248 (LEQQGQQEGQLEQP). Positions 272–285 (QHQKQEVHDPPEHQ) are enriched in basic and acidic residues.

The protein belongs to the involucrin family. In terms of assembly, directly or indirectly cross-linked to cornifelin (CNFN). In terms of processing, substrate of transglutaminase. Specific glutamines or lysines are cross-linked to keratins, desmoplakin and to inter involucrin molecules. As to expression, keratinocytes of epidermis and other stratified squamous epithelia.

It localises to the cytoplasm. Part of the insoluble cornified cell envelope (CE) of stratified squamous epithelia. This is Involucrin (IVL) from Canis lupus familiaris (Dog).